Consider the following 503-residue polypeptide: Anaerobic nitric oxide reductase flavorubredoxin (503 aa).

The segment at 30–210 is zinc metallo-hydrolase; it reads LQGSSYNSYL…PFSRLVTAKI (181 aa). Fe cation is bound by residues H79, E81, D83, H147, D166, and H227. Residues 254 to 393 enclose the Flavodoxin-like domain; sequence ITLFYDTMSN…ICREHGREIA (140 aa). FMN-binding positions include 260 to 264 and 342 to 369; these read TMSNN and AFGS…ETTL. The Rubredoxin-like domain maps to 451–502; sequence NGCMQCSVCQWIYDPALGEPMQDVTPGTMWSDVPDSFLCPECGLGKDVFNPI. C456, C459, C489, and C492 together coordinate Fe cation.

This sequence in the N-terminal section; belongs to the zinc metallo-hydrolase group 3 family. As to quaternary structure, homotetramer. Fe cation serves as cofactor. It depends on FMN as a cofactor.

Its subcellular location is the cytoplasm. Its pathway is nitrogen metabolism; nitric oxide reduction. Anaerobic nitric oxide reductase; uses NADH to detoxify nitric oxide (NO), protecting several 4Fe-4S NO-sensitive enzymes. Has at least 2 reductase partners, only one of which (NorW, flavorubredoxin reductase) has been identified. NO probably binds to the di-iron center; electrons enter from the NorW at rubredoxin and are transferred sequentially to the FMN center and the di-iron center. Also able to function as an aerobic oxygen reductase. This chain is Anaerobic nitric oxide reductase flavorubredoxin, found in Pectobacterium carotovorum subsp. carotovorum (strain PC1).